A 32-amino-acid polypeptide reads, in one-letter code: Cytochrome b6-f complex subunit 8 (32 aa).

Residues Ile-6–Val-26 form a helical membrane-spanning segment.

The protein belongs to the PetN family. In terms of assembly, the 4 large subunits of the cytochrome b6-f complex are cytochrome b6, subunit IV (17 kDa polypeptide, PetD), cytochrome f and the Rieske protein, while the 4 small subunits are PetG, PetL, PetM and PetN. The complex functions as a dimer.

It is found in the plastid. Its subcellular location is the chloroplast thylakoid membrane. In terms of biological role, component of the cytochrome b6-f complex, which mediates electron transfer between photosystem II (PSII) and photosystem I (PSI), cyclic electron flow around PSI, and state transitions. In Illicium oligandrum (Star anise), this protein is Cytochrome b6-f complex subunit 8.